Consider the following 58-residue polypeptide: Photosystem II reaction center protein K (58 aa).

The propeptide occupies Met-1–Ala-21. A helical membrane pass occupies residues Ile-29–Phe-49.

This sequence belongs to the PsbK family. PSII is composed of 1 copy each of membrane proteins PsbA, PsbB, PsbC, PsbD, PsbE, PsbF, PsbH, PsbI, PsbJ, PsbK, PsbL, PsbM, PsbT, PsbX, PsbY, PsbZ, Psb30/Ycf12, at least 3 peripheral proteins of the oxygen-evolving complex and a large number of cofactors. It forms dimeric complexes.

The protein localises to the plastid. It is found in the chloroplast thylakoid membrane. In terms of biological role, one of the components of the core complex of photosystem II (PSII). PSII is a light-driven water:plastoquinone oxidoreductase that uses light energy to abstract electrons from H(2)O, generating O(2) and a proton gradient subsequently used for ATP formation. It consists of a core antenna complex that captures photons, and an electron transfer chain that converts photonic excitation into a charge separation. In Chaetosphaeridium globosum (Charophycean green alga), this protein is Photosystem II reaction center protein K.